Reading from the N-terminus, the 310-residue chain is Prephenate dehydratase (310 aa).

A Prephenate dehydratase domain is found at 3–190; the sequence is RIAYLGPEGT…ARTRFVLVGL (188 aa). Residues 204-281 enclose the ACT domain; it reads AVVLRLVNEP…VDVRYLGSWP (78 aa).

As to quaternary structure, homodimer.

The enzyme catalyses prephenate + H(+) = 3-phenylpyruvate + CO2 + H2O. It participates in amino-acid biosynthesis; L-phenylalanine biosynthesis; phenylpyruvate from prephenate: step 1/1. This chain is Prephenate dehydratase (pheA), found in Mycolicibacterium smegmatis (strain ATCC 700084 / mc(2)155) (Mycobacterium smegmatis).